A 29-amino-acid chain; its full sequence is Cytochrome b6-f complex subunit 8 (29 aa).

The helical transmembrane segment at 3-23 (ILSISWAFLMVVFTFSLSLVV) threads the bilayer.

This sequence belongs to the PetN family. The 4 large subunits of the cytochrome b6-f complex are cytochrome b6, subunit IV (17 kDa polypeptide, PetD), cytochrome f and the Rieske protein, while the 4 small subunits are PetG, PetL, PetM and PetN. The complex functions as a dimer.

The protein localises to the plastid. Its subcellular location is the chloroplast thylakoid membrane. Component of the cytochrome b6-f complex, which mediates electron transfer between photosystem II (PSII) and photosystem I (PSI), cyclic electron flow around PSI, and state transitions. The chain is Cytochrome b6-f complex subunit 8 from Chara vulgaris (Common stonewort).